A 778-amino-acid chain; its full sequence is ATP-dependent RNA helicase dbp7 (778 aa).

The interval 20-144 is disordered; the sequence is QTKIKGGSWR…PMEDAKPTNA (125 aa). A compositionally biased stretch (basic and acidic residues) spans 47-58; that stretch reads RTADGDGNKDGN. The segment covering 61 to 72 has biased composition (polar residues); sequence GPRNPNRIQVSG. Residues 92-110 show a composition bias toward gly residues; sequence QAHGQGSGQSKGPKKGQGG. Basic and acidic residues predominate over residues 125-140; the sequence is NAVEEDKNDEPMEDAK. A Q motif motif is present at residues 151-180; that stretch reads DTFTNLGLSPTLAAHLLTKLELKAPTAIQK. The region spanning 184-385 is the Helicase ATP-binding domain; that stretch reads TQLLKEETDA…EISLKDAVHI (202 aa). Position 197–204 (197–204) interacts with ATP; the sequence is AETGSGKT. A DEAD box motif is present at residues 321-324; the sequence is DEGD. A Helicase C-terminal domain is found at 411-625; it reads QLKQSYAIVA…ALTRSTTDDI (215 aa). Positions 470 to 479 are enriched in acidic residues; it reads LEGDNPDEGS. Disordered regions lie at residues 470-503 and 700-778; these read LEGDNPDEGSDSEHEKEKEKEKPTPASTHGTVAP and GKIN…FNLA. Basic and acidic residues-rich tracts occupy residues 480-492 and 709-724; these read DSEHEKEKEKEKP and PGKEDTKKDFKAERKS.

This sequence belongs to the DEAD box helicase family. DDX31/DBP7 subfamily.

Its subcellular location is the nucleus. It localises to the nucleolus. It catalyses the reaction ATP + H2O = ADP + phosphate + H(+). ATP-binding RNA helicase involved in the biogenesis of 60S ribosomal subunits and is required for the normal formation of 25S and 5.8S rRNAs. The polypeptide is ATP-dependent RNA helicase dbp7 (dbp7) (Emericella nidulans (strain FGSC A4 / ATCC 38163 / CBS 112.46 / NRRL 194 / M139) (Aspergillus nidulans)).